Reading from the N-terminus, the 187-residue chain is Large ribosomal subunit protein uL13 (187 aa).

It belongs to the universal ribosomal protein uL13 family.

This Dictyostelium discoideum (Social amoeba) protein is Large ribosomal subunit protein uL13 (rpl13a).